The chain runs to 272 residues: Putative imidazole glycerol phosphate synthase subunit hisF2 (272 aa).

Asp133 is an active-site residue.

The protein belongs to the HisA/HisF family. In terms of assembly, heterodimer of HisH and HisF.

The protein localises to the cytoplasm. It carries out the reaction 5-[(5-phospho-1-deoxy-D-ribulos-1-ylimino)methylamino]-1-(5-phospho-beta-D-ribosyl)imidazole-4-carboxamide + L-glutamine = D-erythro-1-(imidazol-4-yl)glycerol 3-phosphate + 5-amino-1-(5-phospho-beta-D-ribosyl)imidazole-4-carboxamide + L-glutamate + H(+). The protein operates within amino-acid biosynthesis; L-histidine biosynthesis; L-histidine from 5-phospho-alpha-D-ribose 1-diphosphate: step 5/9. Functionally, IGPS catalyzes the conversion of PRFAR and glutamine to IGP, AICAR and glutamate. The HisF subunit catalyzes the cyclization activity that produces IGP and AICAR from PRFAR using the ammonia provided by the HisH subunit. In Vibrio vulnificus (strain YJ016), this protein is Putative imidazole glycerol phosphate synthase subunit hisF2 (hisF2).